The primary structure comprises 622 residues: Low affinity potassium transport system protein Kup (622 aa).

Transmembrane regions (helical) follow at residues 9 to 29 (LPAI…TSPL), 49 to 69 (VFGF…IKYL), 103 to 123 (VIMG…TPAI), 137 to 157 (PQLD…LFMI), 165 to 185 (VGKL…GLGL), 213 to 233 (VSFI…ALYA), 247 to 267 (WFTV…ALLL), 276 to 296 (PFFL…AALA), 337 to 357 (IYIP…IVSF), 363 to 383 (LAAA…ILST), 396 to 416 (FVAL…TANL), and 419 to 439 (LLSG…VMTT).

Belongs to the HAK/KUP transporter (TC 2.A.72) family.

Its subcellular location is the cell inner membrane. The catalysed reaction is K(+)(in) + H(+)(in) = K(+)(out) + H(+)(out). Its function is as follows. Responsible for the low-affinity transport of potassium into the cell. Likely operates as a K(+):H(+) symporter. This Escherichia coli (strain K12 / MC4100 / BW2952) protein is Low affinity potassium transport system protein Kup.